The sequence spans 152 residues: Superoxide dismutase [Cu-Zn] (152 aa).

Cu cation-binding residues include His-45, His-47, and His-62. The cysteines at positions 56 and 145 are disulfide-linked. Positions 62, 70, 79, and 82 each coordinate Zn(2+). His-119 is a binding site for Cu cation.

The protein belongs to the Cu-Zn superoxide dismutase family. Homodimer. Requires Cu cation as cofactor. Zn(2+) serves as cofactor.

The protein resides in the cytoplasm. It catalyses the reaction 2 superoxide + 2 H(+) = H2O2 + O2. Destroys radicals which are normally produced within the cells and which are toxic to biological systems. This chain is Superoxide dismutase [Cu-Zn] (SODCC), found in Carica papaya (Papaya).